We begin with the raw amino-acid sequence, 258 residues long: Protein OS-9 homolog (258 aa).

An N-terminal signal peptide occupies residues 1-18 (MNWTSLVYLWFIFKSIFA). N-linked (GlcNAc...) asparagine glycans are attached at residues N2, N51, and N70. In terms of domain architecture, MRH spans 114 to 237 (TSCVFSFNLH…HINVPKLCSL (124 aa)). C116 and C132 are joined by a disulfide. W127 and Q139 together coordinate a mannooligosaccharide derivative. N165 is a glycosylation site (N-linked (GlcNAc...) asparagine). Disulfide bonds link C193–C223 and C208–C235. D194, R200, E219, and Y225 together coordinate a mannooligosaccharide derivative.

Belongs to the OS-9 family. As to quaternary structure, interacts with missfolded ER lumenal proteins.

The protein resides in the endoplasmic reticulum membrane. Its function is as follows. Lectin involved in the quality control of the secretory pathway. As a member of the endoplasmic reticulum-associated degradation lumenal (ERAD-L) surveillance system, targets misfolded endoplasmic reticulum lumenal glycoproteins for degradation. The sequence is that of Protein OS-9 homolog (YOS9) from Candida albicans (strain SC5314 / ATCC MYA-2876) (Yeast).